The chain runs to 418 residues: Queuine tRNA-ribosyltransferase accessory subunit 2 (418 aa).

Zn(2+) is bound by residues Cys325, Cys327, Cys330, and His356.

The protein belongs to the queuine tRNA-ribosyltransferase family. QTRT2 subfamily. As to quaternary structure, heterodimer of a catalytic subunit and an accessory subunit. It depends on Zn(2+) as a cofactor.

The protein localises to the cytoplasm. In terms of biological role, non-catalytic subunit of the queuine tRNA-ribosyltransferase (TGT) that catalyzes the base-exchange of a guanine (G) residue with queuine (Q) at position 34 (anticodon wobble position) in tRNAs with GU(N) anticodons (tRNA-Asp, -Asn, -His and -Tyr), resulting in the hypermodified nucleoside queuosine (7-(((4,5-cis-dihydroxy-2-cyclopenten-1-yl)amino)methyl)-7-deazaguanosine). The chain is Queuine tRNA-ribosyltransferase accessory subunit 2 from Drosophila yakuba (Fruit fly).